Consider the following 1005-residue polypeptide: Isoleucine--tRNA ligase (1005 aa).

Residues 70-80 (PYANGNIHIGH) carry the 'HIGH' region motif. Residue glutamate 629 participates in L-isoleucyl-5'-AMP binding. The 'KMSKS' region motif lies at 670–674 (KMSKS). Lysine 673 lines the ATP pocket.

This sequence belongs to the class-I aminoacyl-tRNA synthetase family. IleS type 1 subfamily. As to quaternary structure, monomer.

The protein resides in the cytoplasm. It carries out the reaction tRNA(Ile) + L-isoleucine + ATP = L-isoleucyl-tRNA(Ile) + AMP + diphosphate. Functionally, catalyzes the attachment of isoleucine to tRNA(Ile). As IleRS can inadvertently accommodate and process structurally similar amino acids such as valine, to avoid such errors it has two additional distinct tRNA(Ile)-dependent editing activities. One activity is designated as 'pretransfer' editing and involves the hydrolysis of activated Val-AMP. The other activity is designated 'posttransfer' editing and involves deacylation of mischarged Val-tRNA(Ile). The sequence is that of Isoleucine--tRNA ligase from Rhodopseudomonas palustris (strain ATCC BAA-98 / CGA009).